Here is a 2544-residue protein sequence, read N- to C-terminus: DNA polymerase theta (2544 aa).

Positions 1 to 13 are enriched in basic residues; the sequence is MSLPRRSRKRRRS. Residues 1–57 form a disordered region; that stretch reads MSLPRRSRKRRRSSSGSDTFSGDGDSFVSPQLRCGPVLSPPPGLGRGRRLTGTGTNK. The span at 14–29 shows a compositional bias: low complexity; the sequence is SSGSDTFSGDGDSFVS. ATP-binding positions include Gln-95 and 114-121; that span reads APTSAGKT. One can recognise a Helicase ATP-binding domain in the interval 101–285; the sequence is LGHVLEGKNL…WLNAELYHTD (185 aa). The segment at 101 to 551 is helicase activity; sequence LGHVLEGKNL…STSQDMQTYA (451 aa). The DEAH box motif lies at 215–218; the sequence is DELH. The 232-residue stretch at 320–551 folds into the Helicase C-terminal domain; that stretch reads GDEDHIVSLC…STSQDMQTYA (232 aa). The interaction with RAD51 stretch occupies residues 844 to 890; sequence DEEEEAAEERRSMRTIWVTGKGLSAREAAALIVEEAKMILQQDLIEM. Positions 896-955 are disordered; the sequence is PKSPLSSSTHSRTSTSEVKEHTFKSQTKSSHKRLASMGRNSIRASGSNDKPSPDAERGID. Low complexity predominate over residues 898–911; sequence SPLSSSTHSRTSTS. Positions 933-945 are enriched in polar residues; the sequence is GRNSIRASGSNDK. A compositionally biased stretch (basic and acidic residues) spans 946-955; that stretch reads PSPDAERGID. An N6-acetyllysine modification is found at Lys-983. Over residues 1022-1034 the composition is skewed to polar residues; that stretch reads LSFSSEQVNNTLP. Disordered regions lie at residues 1022-1058 and 1128-1167; these read LSFSSEQVNNTLPSGRDRKYQKKSWGSSPVRDSGMHR and VGHPAAGSSPAAARDRRGLAARETEKGNEALTENGGESQL. Residues 1128–1139 show a composition bias toward low complexity; that stretch reads VGHPAAGSSPAA. Basic and acidic residues predominate over residues 1140–1155; sequence ARDRRGLAARETEKGN. Ser-1265 carries the phosphoserine modification. Disordered stretches follow at residues 1266–1288 and 1331–1353; these read GVQGKTGAHATNRTEHSHASNPA and QNKCHSTPGDQHVPGAANTDHVD. A phosphoserine mark is found at Ser-1438, Ser-1442, Ser-1444, and Ser-1449. The segment at 1478-1501 is disordered; sequence FSNPPHPQEDPVMTPTVSEPQGTQ. Positions 1492 to 1501 are enriched in polar residues; sequence PTVSEPQGTQ. A phosphoserine mark is found at Ser-1511, Ser-1519, Ser-1585, and Ser-1592. A disordered region spans residues 1557–1591; the sequence is ECPQGKLVRGDQNEGSPKPKLTETNQDNSFTWSGA. The segment covering 1578 to 1591 has biased composition (polar residues); it reads TETNQDNSFTWSGA. Composition is skewed to basic and acidic residues over residues 1606-1616 and 1628-1638; these read VSSPRENEKPK and NSKESHEREEI. The interval 1606-1697 is disordered; sequence VSSPRENEKP…GLIPPTPVPA (92 aa). Positions 1641–1652 are enriched in polar residues; sequence DLGTVQRTSVFP. Residues 1656-1667 are compositionally biased toward basic and acidic residues; the sequence is VKNRTEGLESKA. A Phosphothreonine modification is found at Thr-1710. The tract at residues 2052 to 2538 is DNA polymerase activity; it reads AECESQKHVM…KVKIGASWGE (487 aa). Loop stretches follow at residues 2097–2132 and 2212–2276; these read KLPPNGEMKTQGSKKTLGSTRRGNESGRRMRLGRQF and EIKM…VPFP. A compositionally biased stretch (polar residues) spans 2104-2117; sequence MKTQGSKKTLGSTR. Residues 2104 to 2124 form a disordered region; that stretch reads MKTQGSKKTLGSTRRGNESGR. The For DNA polymerase activity role is filled by Asp-2284. Asp-2284 and Tyr-2285 together coordinate Mg(2+). The tract at residues 2445 to 2489 is loop 3; sequence QLETFRSTFKSHGHRESMLQNDRTGLLPKRKLKGMFCPMRGGFFI. A Mg(2+)-binding site is contributed by Asp-2494.

This sequence belongs to the DNA polymerase type-A family. In terms of assembly, homomultimer; forms homodimers and homotetramers. Interacts with RAD51. Interacts with ORC2 and ORC4. Interacts with RHNO1; interaction takes place during mitosis and promotes POLQ recruitment to DNA damage sites. Interacts (when phosphorylated) with TOPBP1 (via BRCT domains 7 and 8); promoting POLQ recruitment to DNA damage sites. It depends on Mg(2+) as a cofactor. Post-translationally, phosphorylated by PLK1; promoting interaction with TOPBP1 and recruitment to DNA damage sites.

The protein localises to the nucleus. The protein resides in the chromosome. It catalyses the reaction DNA(n) + a 2'-deoxyribonucleoside 5'-triphosphate = DNA(n+1) + diphosphate. It carries out the reaction ATP + H2O = ADP + phosphate + H(+). Its function is as follows. Low-fidelity DNA polymerase with a helicase activity that promotes microhomology-mediated end-joining (MMEJ), an alternative non-homologous end-joining (NHEJ) machinery required to repair double-strand breaks in DNA during mitosis. MMEJ is an error-prone repair pathway that produces deletions of sequences from the strand being repaired and promotes genomic rearrangements, such as telomere fusions, some of them leading to cellular transformation. MMEJ is required during mitosis to repair persistent double-strand breaks that originate in S-phase. Although error-prone, MMEJ protects against chromosomal instability and tumorigenesis. The polymerase acts by binding directly the 2 ends of resected double-strand breaks, allowing microhomologous sequences in the overhangs to form base pairs. It then extends each strand from the base-paired region using the opposing overhang as a template. Requires partially resected DNA containing 2 to 6 base pairs of microhomology to perform MMEJ. The polymerase lacks proofreading activity and is highly promiscuous: unlike most polymerases, promotes extension of ssDNA and partial ssDNA (pssDNA) substrates. When the ends of a break do not contain terminal microhomology must identify embedded complementary sequences through a scanning step. Also acts as a DNA helicase, promoting dissociation of the replication protein A complex (RPA/RP-A), composed of RPA1, RPA2 and RPA3, from resected double-strand breaks to allow their annealing and subsequent joining by MMEJ. Removal of RPA/RP-A complex proteins prevents RAD51 accumulation at resected ends, thereby inhibiting homology-recombination repair (HR) pathway. Also shows RNA-directed DNA polymerase activity to mediate DNA repair in vitro; however this activity needs additional evidence in vivo. May also have lyase activity. Involved in somatic hypermutation of immunoglobulin genes, a process that requires the activity of DNA polymerases to ultimately introduce mutations at both A/T and C/G base pairs. However, POLQ does not play a major role in somatic hypermutation. POLQ-mediated end joining activity is involved in random integration of exogenous DNA hampers. The chain is DNA polymerase theta from Mus musculus (Mouse).